The sequence spans 257 residues: MEKEIFYDSDGAKIRAFLATPENPKLAVIVIHEIWGLNDNIKDISRRLANEGYMALAPQLYTRNEDVLNEGNIQNVMMKVWSIPPEKRNDPNSYQQIMSALDEKGKKVAELLVLNRQKTEEQMIKDAIKAYEYVSSQGVKKIVSMGFCMGGGLAFQLATEVPLDGTIVFYGRNPQPLEAIQKIKGPILGLYAGEDPPIDAGLPDLISAIIKYKKDLELKIYPGAYHAFFNDRGRSYNKEAAEDAWERVKSFLRRVSK.

Residues Cys-148, Asp-195, and His-226 contribute to the active site.

This sequence belongs to the dienelactone hydrolase family.

The enzyme catalyses 2-(5-oxo-2,5-dihydrofuran-2-ylidene)acetate + H2O = 4-oxohex-2-enedioate + H(+). In Saccharolobus solfataricus (strain ATCC 35092 / DSM 1617 / JCM 11322 / P2) (Sulfolobus solfataricus), this protein is Putative carboxymethylenebutenolidase.